Here is a 360-residue protein sequence, read N- to C-terminus: Peptide chain release factor 1 (360 aa).

At Gln-235 the chain carries N5-methylglutamine. A disordered region spans residues 285 to 304 (KRQQEEASTRRNLLGSGDRS).

This sequence belongs to the prokaryotic/mitochondrial release factor family. In terms of processing, methylated by PrmC. Methylation increases the termination efficiency of RF1.

It is found in the cytoplasm. Its function is as follows. Peptide chain release factor 1 directs the termination of translation in response to the peptide chain termination codons UAG and UAA. The chain is Peptide chain release factor 1 from Edwardsiella ictaluri (strain 93-146).